The chain runs to 256 residues: MNRIGVFGATGRVGKLLVELLGSDENAKLSSVFVRKELDFSMPPGALVTNDYKTFLEGCDVVIDFSLPDATAALLETAMQGHPKPLVIGTTGLDAHHFNLIHEASRQMPVLYATNMSLGVAILNKMVHTAAKALADFDIEIVEMHHRHKKDSPSGTALTLAESCAKARGVELDEVRVSGRNGNIGERKSEEIAVMSLRGGDIAGKHTVGFYSEGEYLEFVHTATSRMTFAKGALRAAKWLAKQESGLYGISDALGI.

Residue 8–13 coordinates NAD(+); the sequence is GATGRV. Residue lysine 36 coordinates NADP(+). Residues 89-91 and 113-116 each bind NAD(+); these read GTT and ATNM. Histidine 145 acts as the Proton donor/acceptor in catalysis. Position 146 (histidine 146) interacts with (S)-2,3,4,5-tetrahydrodipicolinate. Lysine 149 (proton donor) is an active-site residue. 155–156 provides a ligand contact to (S)-2,3,4,5-tetrahydrodipicolinate; that stretch reads GT.

It belongs to the DapB family.

It is found in the cytoplasm. It carries out the reaction (S)-2,3,4,5-tetrahydrodipicolinate + NAD(+) + H2O = (2S,4S)-4-hydroxy-2,3,4,5-tetrahydrodipicolinate + NADH + H(+). The catalysed reaction is (S)-2,3,4,5-tetrahydrodipicolinate + NADP(+) + H2O = (2S,4S)-4-hydroxy-2,3,4,5-tetrahydrodipicolinate + NADPH + H(+). It participates in amino-acid biosynthesis; L-lysine biosynthesis via DAP pathway; (S)-tetrahydrodipicolinate from L-aspartate: step 4/4. Functionally, catalyzes the conversion of 4-hydroxy-tetrahydrodipicolinate (HTPA) to tetrahydrodipicolinate. The polypeptide is 4-hydroxy-tetrahydrodipicolinate reductase (Wolinella succinogenes (strain ATCC 29543 / DSM 1740 / CCUG 13145 / JCM 31913 / LMG 7466 / NCTC 11488 / FDC 602W) (Vibrio succinogenes)).